Reading from the N-terminus, the 165-residue chain is Endoribonuclease YbeY (165 aa).

Residues H130, H134, and H140 each coordinate Zn(2+).

This sequence belongs to the endoribonuclease YbeY family. It depends on Zn(2+) as a cofactor.

The protein localises to the cytoplasm. Functionally, single strand-specific metallo-endoribonuclease involved in late-stage 70S ribosome quality control and in maturation of the 3' terminus of the 16S rRNA. This is Endoribonuclease YbeY from Streptococcus suis (strain 98HAH33).